A 916-amino-acid chain; its full sequence is Neurofilament medium polypeptide (916 aa).

Polar residues predominate over residues 1–10; that stretch reads MSYTLDSLGN. Residues 1-51 are disordered; sequence MSYTLDSLGNPSAYRRVTETRSSFSRVSGSPSSGFRSQSWSRGSPSTVSSS. The residue at position 2 (serine 2) is an N-acetylserine. A head region spans residues 2-104; it reads SYTLDSLGNP…KLSRSNEKEQ (103 aa). Over residues 21–44 the composition is skewed to low complexity; sequence RSSFSRVSGSPSSGFRSQSWSRGS. Serine 30 is subject to Phosphoserine. Residue arginine 42 is modified to Omega-N-methylarginine. A glycan (O-linked (GlcNAc) threonine) is linked at threonine 47. Phosphoserine is present on serine 99. The IF rod domain maps to 101–412; that stretch reads EKEQLQGLND…KLLEGEETRF (312 aa). The segment at 105–136 is coil 1A; the sequence is LQGLNDRFAGYIEKVHYLEQQNKEIEAEIQAL. The interval 137–149 is linker 1; sequence RQKQASHAQLGDA. The coil 1B stretch occupies residues 150 to 248; the sequence is YDQEIRELRA…EEEVADLLAQ (99 aa). Serine 226 carries the post-translational modification Phosphoserine. The interval 249–265 is linker 12; sequence IQASHITVERKDYLKTD. A coil 2A region spans residues 266-287; the sequence is ISTALKEIRSQLESHSDQNMHQ. The tract at residues 288–291 is linker 2; that stretch reads AEEW. The interval 292 to 412 is coil 2B; the sequence is FKCRYAKLTE…KLLEGEETRF (121 aa). Phosphotyrosine is present on tyrosine 320. Serine 346 and serine 418 each carry phosphoserine. A tail region spans residues 413-916; it reads STFAGSITGP…AIVKEVTQSD (504 aa). Threonine 431 carries an O-linked (GlcNAc) threonine glycan. 2 positions are modified to phosphoserine: serine 467 and serine 483. Residues 485 to 851 form a disordered region; the sequence is KEEKKEAAEE…KKGGDKSEEK (367 aa). Over residues 493–505 the composition is skewed to acidic residues; sequence EEKEEEPEAEEEE. Residue serine 511 is modified to Phosphoserine. A compositionally biased stretch (acidic residues) spans 521–541; that stretch reads KEEEGEKEEEEGQEEEEEEDE. Residues 542-561 are compositionally biased toward basic and acidic residues; it reads GAKSDQAEEGGSEKEGSSEK. Serine 545, serine 553, serine 558, and serine 559 each carry phosphoserine. Residues 562–582 are compositionally biased toward acidic residues; that stretch reads EEGEQEEGETEAEAEGEEAEA. Residue threonine 571 is modified to Phosphothreonine. Basic and acidic residues predominate over residues 583–614; sequence KEEKKVEEKSEEVATKEELVADAKVEKPEKAK. Tandem repeats lie at residues 614-626, 627-639, 640-652, 653-665, 666-678, and 679-691. Residues 614-691 form a 6 X 13 AA approximate tandem repeats of K-S-P-V-[PS]-K-S-P-V-E-E-[KA]-[GAK] region; that stretch reads KSPVPKSPVE…VPKSPVEEAK (78 aa). Residues serine 641 and serine 646 each carry the phosphoserine modification. Phosphoserine is present on residues serine 680 and serine 685. Basic and acidic residues-rich tracts occupy residues 686–701, 707–742, and 755–778; these read PVEEAKSKAEVGKGEQ, KEVKEAPKEEKVEKKEEKPKDVPEKKKAESPVKEEA, and VHLEKETKEEGKPLQQEKEKEKAG. Serine 736 is modified (phosphoserine). A phosphoserine mark is found at serine 783, serine 821, and serine 837. Residues 788 to 828 show a composition bias toward basic and acidic residues; sequence SDKGAKGSRKEDIAVNGEVEGKEEVEQETKEKGSGREEEKG. Positions 839–851 are enriched in basic and acidic residues; the sequence is ADEKKGGDKSEEK.

The protein belongs to the intermediate filament family. In terms of assembly, forms heterodimers with NEFL; which can further hetero-oligomerize (in vitro). Forms heterodimers with INA (in vitro). Post-translationally, there are a number of repeats of the tripeptide K-S-P, NFM is phosphorylated on a number of the serines in this motif. It is thought that phosphorylation of NFM results in the formation of interfilament cross bridges that are important in the maintenance of axonal caliber. In terms of processing, phosphorylation seems to play a major role in the functioning of the larger neurofilament polypeptides (NF-M and NF-H), the levels of phosphorylation being altered developmentally and coincidentally with a change in the neurofilament function. Phosphorylated in the head and rod regions by the PKC kinase PKN1, leading to the inhibition of polymerization.

It is found in the cytoplasm. It localises to the cytoskeleton. Its subcellular location is the cell projection. The protein resides in the axon. Neurofilaments usually contain three intermediate filament proteins: NEFL, NEFM, and NEFH which are involved in the maintenance of neuronal caliber. May additionally cooperate with the neuronal intermediate filament proteins PRPH and INA to form neuronal filamentous networks. This is Neurofilament medium polypeptide (NEFM) from Homo sapiens (Human).